Consider the following 509-residue polypeptide: Methionine--tRNA ligase (509 aa).

The 'HIGH' region motif lies at 12-22 (YYPSGDLHLGH). The 'KMSKS' region signature appears at 302-306 (KMSKS). An ATP-binding site is contributed by K305.

It belongs to the class-I aminoacyl-tRNA synthetase family. MetG type 2B subfamily. Monomer.

It localises to the cytoplasm. The catalysed reaction is tRNA(Met) + L-methionine + ATP = L-methionyl-tRNA(Met) + AMP + diphosphate. In terms of biological role, is required not only for elongation of protein synthesis but also for the initiation of all mRNA translation through initiator tRNA(fMet) aminoacylation. This Mycoplasmopsis pulmonis (strain UAB CTIP) (Mycoplasma pulmonis) protein is Methionine--tRNA ligase (metG).